The primary structure comprises 424 residues: Choline-phosphate cytidylyltransferase (424 aa).

The tract at residues 1 to 70 is disordered; it reads MANPTTGKSS…RKRRRLTKEF (70 aa). The span at 14–24 shows a compositional bias: low complexity; that stretch reads KLSNSSLSNLF. Phosphoserine is present on S16. A compositionally biased stretch (acidic residues) spans 35–44; sequence ETEEQDNEDK. A compositionally biased stretch (basic and acidic residues) spans 45–55; the sequence is DESKNQDENKD. A Phosphothreonine modification is found at T59. Residues 111–119 and K149 each bind CTP; that span reads VFDLFHLGH. Residues K149 and W178 each coordinate substrate. Residues 195-196, Y200, and 223-227 contribute to the CTP site; these read HD and RTNGV. At S346 the chain carries Phosphoserine. A disordered region spans residues 348 to 424; sequence ATEFANEFTG…LTQKKKQSAN (77 aa). Residues 381 to 398 are compositionally biased toward low complexity; the sequence is NSNNTNTNSDSDSNTNST. Phosphoserine; by CK2 is present on S401.

The protein belongs to the cytidylyltransferase family.

The protein localises to the membrane. The enzyme catalyses phosphocholine + CTP + H(+) = CDP-choline + diphosphate. It participates in phospholipid metabolism; phosphatidylcholine biosynthesis; phosphatidylcholine from phosphocholine: step 1/2. Functionally, catalyzes the key rate-limiting step in the CDP-choline pathway for phosphatidylcholine biosynthesis. The chain is Choline-phosphate cytidylyltransferase (PCT1) from Saccharomyces cerevisiae (strain ATCC 204508 / S288c) (Baker's yeast).